Consider the following 73-residue polypeptide: Small ribosomal subunit protein eS27 (73 aa).

Residues Cys-28, Cys-31, Cys-47, and Cys-50 each coordinate Zn(2+). A C4-type zinc finger spans residues 28-50 (CPKCGNRQVVFSHSTFRARCLNC).

Belongs to the eukaryotic ribosomal protein eS27 family. In terms of assembly, part of the 30S ribosomal subunit. The cofactor is Zn(2+).

The protein is Small ribosomal subunit protein eS27 of Aeropyrum pernix (strain ATCC 700893 / DSM 11879 / JCM 9820 / NBRC 100138 / K1).